The primary structure comprises 698 residues: Iron-sulfur clusters transporter ATM1, mitochondrial (698 aa).

Residues 1–23 (MIPQLLQRSSRACPRYNPALYRL) constitute a mitochondrion transit peptide. The Mitochondrial matrix segment spans residues 24–113 (STTSQQRPGL…PKDDWGTKLR (90 aa)). A disordered region spans residues 32-63 (GLTQTFWTSAPRREQPRTPTDSKPTTTKPSAV). Over residues 48–61 (RTPTDSKPTTTKPS) the composition is skewed to low complexity. A helical membrane pass occupies residues 114–135 (VSLAVSLLIGAKVLNVQVPFYF). The ABC transmembrane type-1 domain occupies 114 to 404 (VSLAVSLLIG…LGSVYRELRQ (291 aa)). Residues 136 to 158 (KSIVDSMNIDVAAVGGTATTVAG) lie on the Mitochondrial intermembrane side of the membrane. The chain crosses the membrane as a helical span at residues 159–182 (AMILAYGASRIGATVFQELRNAVF). At 183–231 (ASVAQNAIRKVACNVFDHLLRLDLTFHLSKQTGGLTRALDRGTKGISFI) the chain is on the mitochondrial matrix side. A helical transmembrane segment spans residues 232–255 (LSSMVFHVLPTALEISMVCGILTY). Residue Asn256 is a topological domain, mitochondrial intermembrane. Residues 257–277 (YGAKFAALTVLTMVSYTAFTI) form a helical membrane-spanning segment. Residues 278-343 (WTTAWRTKFR…NSIKVATSLA (66 aa)) are Mitochondrial matrix-facing. Glutathione is bound by residues 283–287 (RTKFR) and 346–349 (NSGQ). The chain crosses the membrane as a helical span at residues 344-362 (LLNSGQNIIFSSALTGMMY). The Mitochondrial intermembrane segment spans residues 363 to 377 (LAANGVAEGTLTVGD). A helical transmembrane segment spans residues 378 to 399 (LVMVNQLVFQLSVPLNFLGSVY). A glutathione-binding site is contributed by Gly396. Residues 400–698 (RELRQSLLDM…EEENDEQKKN (299 aa)) lie on the Mitochondrial matrix side of the membrane. An ABC transporter domain is found at 439–675 (IKFENVNFAY…DGVYAELWSA (237 aa)). ATP is bound by residues Tyr448 and 472–483 (GPSGCGKSTLLR). The disordered stretch occupies residues 679–698 (MFGEDGKEKSEEENDEQKKN). Residues 682–698 (EDGKEKSEEENDEQKKN) are compositionally biased toward basic and acidic residues.

It belongs to the ABC transporter superfamily. ABCB family. Heavy Metal importer (TC 3.A.1.210) subfamily. Homodimer.

Its subcellular location is the mitochondrion inner membrane. Its function is as follows. Performs an essential function in the generation of cytoplasmic iron-sulfur proteins by mediating the ATP-dependent export of Fe/S cluster precursors synthesized by NFS1 and other mitochondrial proteins. Hydrolyzes ATP. Binds glutathione and may function by transporting a glutathione-conjugated iron-sulfur compound. This Gibberella zeae (strain ATCC MYA-4620 / CBS 123657 / FGSC 9075 / NRRL 31084 / PH-1) (Wheat head blight fungus) protein is Iron-sulfur clusters transporter ATM1, mitochondrial.